The sequence spans 273 residues: Ribonuclease PH (273 aa).

Phosphate contacts are provided by residues R86 and G124–R126. The disordered stretch occupies residues G254–L273.

The protein belongs to the RNase PH family. Homohexameric ring arranged as a trimer of dimers.

The enzyme catalyses tRNA(n+1) + phosphate = tRNA(n) + a ribonucleoside 5'-diphosphate. Phosphorolytic 3'-5' exoribonuclease that plays an important role in tRNA 3'-end maturation. Removes nucleotide residues following the 3'-CCA terminus of tRNAs; can also add nucleotides to the ends of RNA molecules by using nucleoside diphosphates as substrates, but this may not be physiologically important. Probably plays a role in initiation of 16S rRNA degradation (leading to ribosome degradation) during starvation. The polypeptide is Ribonuclease PH (Symbiobacterium thermophilum (strain DSM 24528 / JCM 14929 / IAM 14863 / T)).